A 192-amino-acid chain; its full sequence is Peptidyl-tRNA hydrolase (192 aa).

Tyr-17 lines the tRNA pocket. The active-site Proton acceptor is the His-22. TRNA is bound by residues Phe-68, Asn-70, and Asn-116.

This sequence belongs to the PTH family. Monomer.

It localises to the cytoplasm. The catalysed reaction is an N-acyl-L-alpha-aminoacyl-tRNA + H2O = an N-acyl-L-amino acid + a tRNA + H(+). Functionally, hydrolyzes ribosome-free peptidyl-tRNAs (with 1 or more amino acids incorporated), which drop off the ribosome during protein synthesis, or as a result of ribosome stalling. Catalyzes the release of premature peptidyl moieties from peptidyl-tRNA molecules trapped in stalled 50S ribosomal subunits, and thus maintains levels of free tRNAs and 50S ribosomes. In Buchnera aphidicola subsp. Cinara cedri (strain Cc), this protein is Peptidyl-tRNA hydrolase.